The chain runs to 334 residues: BRISC and BRCA1-A complex member 1 (334 aa).

At Met1 the chain carries N-acetylmethionine. The disordered stretch occupies residues 1 to 79 (MEVAEANSPT…VPGAVPKPWQ (79 aa)). Ser8 is modified (phosphoserine). The segment covering 10-25 (TEEEEEEEEEEGEEPI) has biased composition (acidic residues). Residues Ser34 and Ser54 each carry the phosphoserine modification. Low complexity predominate over residues 59–68 (EAATADDGAA). The segment at 100 to 303 (VIICLDLSEE…LELHNCVAKL (204 aa)) is VWFA-like.

The protein belongs to the BABAM1 family. In terms of assembly, component of the ARISC complex, at least composed of UIMC1/RAP80, ABRAXAS1, BRCC3/BRCC36, BABAM2 and BABAM1/NBA1. Component of the BRCA1-A complex, at least composed of BRCA1, BARD1, UIMC1/RAP80, ABRAXAS1, BRCC3/BRCC36, BABAM2 and BABAM1/NBA1. In the BRCA1-A complex, interacts directly with ABRAXAS1 and BABAM2. Component of the BRISC complex, at least composed of ABRAXAS2, BRCC3/BRCC36, BABAM2 and BABAM1/NBA1. Identified in a complex with SHMT2 and the other subunits of the BRISC complex.

It localises to the cytoplasm. Its subcellular location is the nucleus. Functionally, component of the BRCA1-A complex, a complex that specifically recognizes 'Lys-63'-linked ubiquitinated histones H2A and H2AX at DNA lesions sites, leading to target the BRCA1-BARD1 heterodimer to sites of DNA damage at double-strand breaks (DSBs). The BRCA1-A complex also possesses deubiquitinase activity that specifically removes 'Lys-63'-linked ubiquitin on histones H2A and H2AX. In the BRCA1-A complex, it is required for the complex integrity and its localization at DSBs. Component of the BRISC complex, a multiprotein complex that specifically cleaves 'Lys-63'-linked ubiquitin in various substrates. In these 2 complexes, it is probably required to maintain the stability of BABAM2 and help the 'Lys-63'-linked deubiquitinase activity mediated by BRCC3/BRCC36 component. The BRISC complex is required for normal mitotic spindle assembly and microtubule attachment to kinetochores via its role in deubiquitinating NUMA1. Plays a role in interferon signaling via its role in the deubiquitination of the interferon receptor IFNAR1; deubiquitination increases IFNAR1 activity by enhancing its stability and cell surface expression. Down-regulates the response to bacterial lipopolysaccharide (LPS) via its role in IFNAR1 deubiquitination. This Rattus norvegicus (Rat) protein is BRISC and BRCA1-A complex member 1 (Babam1).